The following is a 93-amino-acid chain: Small ribosomal subunit protein bS18 (93 aa).

Residues 1–11 (MAPSARNRKPG) are compositionally biased toward basic residues. A disordered region spans residues 1 to 27 (MAPSARNRKPGARSMAKAAALRKPKKK).

This sequence belongs to the bacterial ribosomal protein bS18 family. In terms of assembly, part of the 30S ribosomal subunit. Forms a tight heterodimer with protein bS6.

Its function is as follows. Binds as a heterodimer with protein bS6 to the central domain of the 16S rRNA, where it helps stabilize the platform of the 30S subunit. This is Small ribosomal subunit protein bS18 from Salinispora tropica (strain ATCC BAA-916 / DSM 44818 / JCM 13857 / NBRC 105044 / CNB-440).